The sequence spans 928 residues: Tyrosine-protein phosphatase 3 (928 aa).

A Phosphothreonine modification is found at Thr-75. In terms of domain architecture, Rhodanese spans 111–232 (PDEKVLLLDV…FKILFPDHIN (122 aa)). The disordered stretch occupies residues 247–307 (KSPKTNLMNS…PRNVLSDSPM (61 aa)). A Phosphoserine modification is found at Ser-248. Composition is skewed to polar residues over residues 249-259 (PKTNLMNSLHN) and 265-275 (TATTPLSSPQM). Over residues 280–289 (KVPDDSRSDH) the composition is skewed to basic and acidic residues. The segment covering 290–307 (SNFSSSPSPRNVLSDSPM) has biased composition (low complexity). Phosphoserine is present on residues Ser-297 and Ser-368. 2 disordered regions span residues 467-487 (LTSTSSSTIMPPKFPDVNKVQ) and 672-713 (MRKN…NNNN). Residues 502-878 (YKSMLSLESD…IFIYDCLLFY (377 aa)) enclose the Tyrosine-protein phosphatase domain. Over residues 672–691 (MRKNTMGTQNSSLYSAGVQG) the composition is skewed to polar residues. Residues 692–713 (NSSNYSTDNDNDNDNNNNNNNN) are compositionally biased toward low complexity. Cys-804 serves as the catalytic Phosphocysteine intermediate.

The protein belongs to the protein-tyrosine phosphatase family. Non-receptor class subfamily. As to quaternary structure, interacts with HOG1.

Its subcellular location is the cytoplasm. It catalyses the reaction O-phospho-L-tyrosyl-[protein] + H2O = L-tyrosyl-[protein] + phosphate. Major phosphatase responsible for tyrosine dephosphorylation of MAP kinases FUS3 and HOG1 to inactivate their activity; it also has important roles, along with MSG5, in the inactivation of FUS3 following pheromone stimulation. This is Tyrosine-protein phosphatase 3 (PTP3) from Saccharomyces cerevisiae (strain ATCC 204508 / S288c) (Baker's yeast).